Here is a 172-residue protein sequence, read N- to C-terminus: Disulfide bond formation protein B (172 aa).

At 1–16 (MNLFASLNQFSKNRIS) the chain is on the cytoplasmic side. Residues 17-33 (WLLLLLFVVFFEGAALF) form a helical membrane-spanning segment. Topologically, residues 34–51 (FQHVMMLSPCVMCIYERV) are periplasmic. A disulfide bond links C43 and C46. Residues 52 to 67 (AMLGVGGAALFGLIAP) form a helical membrane-spanning segment. At 68–74 (NNPLVRW) the chain is on the cytoplasmic side. The chain crosses the membrane as a helical span at residues 75–92 (LGLAAWGASAYKGLALSL). Over 93 to 147 (QHVDYQFNPSPFATCDLFVTFPDWAPLNQWAPWMFEAYGDCSKIVWQFMTLSMPQ) the chain is Periplasmic. A disulfide bridge connects residues C107 and C133. Residues 148-166 (WLVIIFAGNLVALAFIVIA) form a helical membrane-spanning segment. At 167–172 (QFFKSK) the chain is on the cytoplasmic side.

The protein belongs to the DsbB family.

The protein localises to the cell inner membrane. In terms of biological role, required for disulfide bond formation in some periplasmic proteins. Acts by oxidizing the DsbA protein. The protein is Disulfide bond formation protein B of Vibrio vulnificus (strain CMCP6).